Reading from the N-terminus, the 242-residue chain is Trypsin-1 (242 aa).

The signal sequence occupies residues 1-15 (MISLVFVLLIGAAFA). Residues 16 to 20 (TEDDK) constitute a propeptide, activation peptide. Residues 21-240 (IVGGYECKAY…FNDWLTSTMA (220 aa)) form the Peptidase S1 domain. 6 disulfide bridges follow: Cys27–Cys156, Cys45–Cys61, Cys129–Cys229, Cys136–Cys202, Cys167–Cys181, and Cys192–Cys216. His60 functions as the Charge relay system in the catalytic mechanism. Ca(2+) is bound by residues Glu72, Asn74, Val77, and Glu82. Asp104 functions as the Charge relay system in the catalytic mechanism. Ser196 acts as the Charge relay system in catalysis.

The protein belongs to the peptidase S1 family. Ca(2+) is required as a cofactor.

It is found in the secreted. The protein localises to the extracellular space. It catalyses the reaction Preferential cleavage: Arg-|-Xaa, Lys-|-Xaa.. This chain is Trypsin-1, found in Salmo salar (Atlantic salmon).